A 176-amino-acid polypeptide reads, in one-letter code: Endothelin-2 (176 aa).

The signal sequence occupies residues 1–22 (MVSPAWCSIALALLLALHEGKG). Residues 23 to 44 (QAAATMEQPASAPKGRGPHLRF) constitute a propeptide that is removed on maturation. 2 disulfide bridges follow: Cys-47-Cys-61 and Cys-49-Cys-57. Residues 68 to 176 (VNTAGQTAPY…IPAHSRRRKR (109 aa)) constitute a propeptide that is removed on maturation. The tract at residues 94-109 (CECSSAGDSACATFCH) is endothelin-like.

The protein belongs to the endothelin/sarafotoxin family.

It localises to the secreted. In terms of biological role, vasoconstrictor. This Rattus norvegicus (Rat) protein is Endothelin-2 (Edn2).